The primary structure comprises 595 residues: Actin-histidine N-methyltransferase (595 aa).

Positions 1 to 22 (MGKKSRVKTQKSGTGATATVSP) are disordered. Positions 10–20 (QKSGTGATATV) are enriched in polar residues. Residues R75, 104 to 106 (EGF), R254, 275 to 279 (DMCNH), and 325 to 327 (SGF) contribute to the S-adenosyl-L-methionine site. The SET domain maps to 94–314 (EGFEMVNFKE…AGEQIYIFYG (221 aa)). S513 is subject to Phosphoserine. A compositionally biased stretch (polar residues) spans 549–573 (ENGLVNGENSIPNGTRSENENLNQE). The interval 549 to 595 (ENGLVNGENSIPNGTRSENENLNQEGSKRAVEDAKGSSSDSTDEVKE) is disordered. Residues 574–583 (GSKRAVEDAK) are compositionally biased toward basic and acidic residues.

It belongs to the class V-like SAM-binding methyltransferase superfamily. SETD3 actin-histidine methyltransferase family. In terms of assembly, interacts with MYOD1. In terms of processing, phosphorylated by GSK3B, which is required for recognition by the SCF(FBXW7) complex and subsequent degradation. Post-translationally, ubiquitinated by the SCF(FBXW7) complex following phosphorylation by GSK3B, leading to its degradation by the proteasome.

Its subcellular location is the cytoplasm. It is found in the nucleus. It carries out the reaction L-histidyl-[protein] + S-adenosyl-L-methionine = N(tele)-methyl-L-histidyl-[protein] + S-adenosyl-L-homocysteine + H(+). Protein-histidine N-methyltransferase that specifically mediates 3-methylhistidine (tele-methylhistidine) methylation of actin at 'His-73'. Histidine methylation of actin is required for smooth muscle contraction of the laboring uterus during delivery. Does not have protein-lysine N-methyltransferase activity and probably only catalyzes histidine methylation of actin. The sequence is that of Actin-histidine N-methyltransferase from Plecturocebus moloch (Dusky titi monkey).